The sequence spans 222 residues: Large ribosomal subunit protein uL1 (222 aa).

Belongs to the universal ribosomal protein uL1 family. In terms of assembly, part of the 50S ribosomal subunit.

In terms of biological role, binds directly to 23S rRNA. Probably involved in E site tRNA release. Functionally, protein L1 is also a translational repressor protein, it controls the translation of its operon by binding to its mRNA. The sequence is that of Large ribosomal subunit protein uL1 from Pyrobaculum aerophilum (strain ATCC 51768 / DSM 7523 / JCM 9630 / CIP 104966 / NBRC 100827 / IM2).